Reading from the N-terminus, the 157-residue chain is Small ribosomal subunit protein uS7 (157 aa).

Belongs to the universal ribosomal protein uS7 family. As to quaternary structure, part of the 30S ribosomal subunit. Contacts proteins S9 and S11.

One of the primary rRNA binding proteins, it binds directly to 16S rRNA where it nucleates assembly of the head domain of the 30S subunit. Is located at the subunit interface close to the decoding center, probably blocks exit of the E-site tRNA. The protein is Small ribosomal subunit protein uS7 of Chlamydia pneumoniae (Chlamydophila pneumoniae).